The following is a 242-amino-acid chain: UPF0246 protein SPP_1571 (242 aa).

Belongs to the UPF0246 family.

This Streptococcus pneumoniae (strain P1031) protein is UPF0246 protein SPP_1571.